Here is a 341-residue protein sequence, read N- to C-terminus: Phosphoribosylformylglycinamidine cyclo-ligase (341 aa).

This sequence belongs to the AIR synthase family.

The protein localises to the cytoplasm. It carries out the reaction 2-formamido-N(1)-(5-O-phospho-beta-D-ribosyl)acetamidine + ATP = 5-amino-1-(5-phospho-beta-D-ribosyl)imidazole + ADP + phosphate + H(+). It participates in purine metabolism; IMP biosynthesis via de novo pathway; 5-amino-1-(5-phospho-D-ribosyl)imidazole from N(2)-formyl-N(1)-(5-phospho-D-ribosyl)glycinamide: step 2/2. This is Phosphoribosylformylglycinamidine cyclo-ligase from Caldicellulosiruptor bescii (strain ATCC BAA-1888 / DSM 6725 / KCTC 15123 / Z-1320) (Anaerocellum thermophilum).